The primary structure comprises 273 residues: MTKDILDADFIKEMAKTTSNLYRLGWDERNGGNITYLLDEKEVVEYLDVKQIIRTIPMDFDGEKLAGKYFLVTGSGKYFKNVEEAPAVNLGVIQVSEDGKAVHLLWGYTDGGLPTSELPAHFMSHIARLSVDPENRVVMHCHATHLLAMTFTHELTERAFTRTLWQMCTECLVVFPEGVGIIPWLVPGTNDIGKATSEKMKENRLIVWPHHGIYGAGQSMDETFGLIETAEKAAEVYTIVMSQGGIKQAITDEQLKALGERFGVEAKAGYLNN.

The active site involves Glu117. His140, His142, and His211 together coordinate Zn(2+).

Belongs to the aldolase class II family. RhaD subfamily. It depends on Zn(2+) as a cofactor.

The protein localises to the cytoplasm. It catalyses the reaction L-rhamnulose 1-phosphate = (S)-lactaldehyde + dihydroxyacetone phosphate. It participates in carbohydrate degradation; L-rhamnose degradation; glycerone phosphate from L-rhamnose: step 3/3. In terms of biological role, catalyzes the reversible cleavage of L-rhamnulose-1-phosphate to dihydroxyacetone phosphate (DHAP) and L-lactaldehyde. The chain is Rhamnulose-1-phosphate aldolase from Listeria innocua serovar 6a (strain ATCC BAA-680 / CLIP 11262).